The sequence spans 367 residues: MADIASKEVPLHSVQVEALVVMKIVKACAATYPTTATGSIVGMDSNGTLQITNSFPFPTTDVATSDSHPNDHMAASNIAAAAPRSKANVIYQSEMIKMLKEVNVDANNVGWYTSANMGNFINTSLIENQFFYQKEPNERTVALVHDVSRSAQGALSLRAFRLSPTFMAAYKESKFTTENMQKSKLTYKDILVELPIIVHNSHLLTSFLHQMPVELPKKDLDFPASFADLNRNTPPTPLYPNMESLDLSIDPYLERTCDMLLDSIETHYTELNNFQYFQRQLTREQAKVTAWKAKRTAENATRATQKLAPLPEDEWERLFKLPTEPSRLEGMLNARQVEQYSRQVDGFTASITGKMFAVKSNLLPEQN.

Residues 14-166 (VQVEALVVMK…LRAFRLSPTF (153 aa)) form the MPN domain.

It belongs to the eIF-3 subunit H family. As to quaternary structure, component of the eukaryotic translation initiation factor 3 (eIF-3) complex.

The protein resides in the cytoplasm. In terms of biological role, component of the eukaryotic translation initiation factor 3 (eIF-3) complex, which is involved in protein synthesis of a specialized repertoire of mRNAs and, together with other initiation factors, stimulates binding of mRNA and methionyl-tRNAi to the 40S ribosome. The eIF-3 complex specifically targets and initiates translation of a subset of mRNAs involved in cell proliferation. The sequence is that of Eukaryotic translation initiation factor 3 subunit H from Botryotinia fuckeliana (strain B05.10) (Noble rot fungus).